Here is a 273-residue protein sequence, read N- to C-terminus: HTH-type transcriptional activator RhaS (273 aa).

The region spanning 174–272 is the HTH araC/xylS-type domain; that stretch reads YQLLDWLQNN…SQSPRDLRSQ (99 aa). DNA-binding regions (H-T-H motif) lie at residues 191–212 and 239–262; these read PELA…KNKT and VTDI…KREF.

In terms of assembly, binds DNA as a dimer.

The protein localises to the cytoplasm. Its function is as follows. Activates expression of the rhaBAD and rhaT operons. This Yersinia pseudotuberculosis serotype O:1b (strain IP 31758) protein is HTH-type transcriptional activator RhaS.